The chain runs to 394 residues: uncharacterized protein (394 aa).

11 helical membrane-spanning segments follow: residues 10 to 30 (PALI…NYYA), 50 to 70 (FIVT…VPLG), 79 to 99 (IVSM…SQSL), 100 to 120 (AMMI…QILV), 138 to 158 (TIMS…GLLA), 166 to 186 (VFWV…RGLP), 218 to 238 (LLGC…AFLL), 243 to 263 (FNYS…GALG), 291 to 311 (WLAI…ILVL), 337 to 357 (LTAG…LISA), and 364 to 384 (GWAG…LVWW).

Belongs to the major facilitator superfamily.

The protein localises to the cell inner membrane. This is an uncharacterized protein from Escherichia coli O157:H7.